A 221-amino-acid polypeptide reads, in one-letter code: MGQKIHPLGFRLGITQQHRSTWFAPRKLYVSWIHEERQLRDYLKTRLADAGVANVQLTRQSDRIEVEIHTACPGAIVGRTGQGLEILREDIQKRLPKVRRVIVHVVEIANPDAQAVLIGGIIAKQLEERIPFRRAVRQAVQRAMRAPGVEGIKIEVSGRLNGAEIARSEWVREGRVPLHTLRADVDYCDCTAQTIYGVLGIKVWIFRGEIRPVRQVLAPGT.

The KH type-2 domain occupies 39–109 (LRDYLKTRLA…RVIVHVVEIA (71 aa)).

This sequence belongs to the universal ribosomal protein uS3 family. As to quaternary structure, part of the 30S ribosomal subunit.

Its subcellular location is the plastid. The protein resides in the chloroplast. In Nephroselmis olivacea (Green alga), this protein is Small ribosomal subunit protein uS3c (rps3).